The following is a 340-amino-acid chain: KH domain-containing RNA-binding protein QKI (340 aa).

The KH domain maps to tyrosine 87–valine 153. The SH3-binding motif lies at proline 275–proline 278. Residues arginine 323–arginine 329 carry the Nuclear localization signal motif.

It belongs to the quaking family. Homodimer; does not require RNA to homodimerize.

Its subcellular location is the cytoplasm. It is found in the nucleus. Its function is as follows. RNA reader protein, which recognizes and binds specific RNAs, thereby regulating RNA metabolic processes, such as pre-mRNA splicing, circular RNA (circRNA) formation, mRNA export, mRNA stability and/or translation. Involved in various cellular processes, such as mRNA storage into stress granules, apoptosis, interferon response, glial cell fate and development. Binds to the 5'-NACUAAY-N(1,20)-UAAY-3' RNA core sequence. Acts as a mRNA modification reader that specifically recognizes and binds mRNA transcripts modified by internal N(7)-methylguanine (m7G). Promotes the formation of circular RNAs (circRNAs): acts by binding to sites flanking circRNA-forming exons. CircRNAs are produced by back-splicing circularization of pre-mRNAs. Required to protect and promote stability of mRNAs which promotes oligodendrocyte differentiation. Acts as an important regulator of muscle development. In Gallus gallus (Chicken), this protein is KH domain-containing RNA-binding protein QKI.